A 191-amino-acid chain; its full sequence is CASP-like protein 4C2 (191 aa).

Over 1 to 29 (MEAADSATNNSKDTHFYGKSRAENRRRSD) the chain is Cytoplasmic. The chain crosses the membrane as a helical span at residues 30 to 50 (AMLLLFRALTFSFSLAAVVVM). Over 51–72 (GTNRYRINPQLKVSWYDFEPYR) the chain is Extracellular. The helical transmembrane segment at 73 to 93 (YVLAVNAIICIYSFVETWLAV) threads the bilayer. Over 94–116 (YTYLQGSYLLPEIFQVWFDYGHD) the chain is Cytoplasmic. A helical transmembrane segment spans residues 117–137 (QGFAYLLFSANSAGVAMAQLL). Residues 138–161 (QSGNTLIHGAYHCTEAGGYCTQAR) are Extracellular-facing. A helical transmembrane segment spans residues 162–182 (VSIALGFVAFLFLALSSLLTG). Topologically, residues 183–191 (LRVARWYLR) are cytoplasmic.

This sequence belongs to the Casparian strip membrane proteins (CASP) family. Homodimer and heterodimers.

It is found in the cell membrane. The sequence is that of CASP-like protein 4C2 from Physcomitrium patens (Spreading-leaved earth moss).